The following is a 520-amino-acid chain: DEP domain-containing protein 7 (520 aa).

The region spanning 45–137 (ALTQVEVKKR…SSCSLYRFIN (93 aa)) is the DEP domain. Residues 148-167 (KSNGRCTPQRPKHSSFQSAP) form a disordered region.

This sequence belongs to the DEPDC7 family.

In Xenopus tropicalis (Western clawed frog), this protein is DEP domain-containing protein 7 (depdc7).